The sequence spans 208 residues: Small ribosomal subunit protein uS5 (208 aa).

Residues Met1–Gly21 show a composition bias toward basic and acidic residues. A disordered region spans residues Met1–Arg38. In terms of domain architecture, S5 DRBM spans Tyr41–Val104.

It belongs to the universal ribosomal protein uS5 family. Part of the 30S ribosomal subunit. Contacts proteins S4 and S8.

In terms of biological role, with S4 and S12 plays an important role in translational accuracy. Its function is as follows. Located at the back of the 30S subunit body where it stabilizes the conformation of the head with respect to the body. This Corynebacterium aurimucosum (strain ATCC 700975 / DSM 44827 / CIP 107346 / CN-1) (Corynebacterium nigricans) protein is Small ribosomal subunit protein uS5.